Here is a 375-residue protein sequence, read N- to C-terminus: 23S rRNA (uracil(747)-C(5))-methyltransferase RlmC (375 aa).

[4Fe-4S] cluster-binding residues include C3, C11, C14, and C87. S-adenosyl-L-methionine contacts are provided by Q212, F241, E262, and N307. C334 acts as the Nucleophile in catalysis.

It belongs to the class I-like SAM-binding methyltransferase superfamily. RNA M5U methyltransferase family. RlmC subfamily.

The catalysed reaction is uridine(747) in 23S rRNA + S-adenosyl-L-methionine = 5-methyluridine(747) in 23S rRNA + S-adenosyl-L-homocysteine + H(+). Catalyzes the formation of 5-methyl-uridine at position 747 (m5U747) in 23S rRNA. The protein is 23S rRNA (uracil(747)-C(5))-methyltransferase RlmC of Escherichia coli (strain SE11).